Here is a 4981-residue protein sequence, read N- to C-terminus: Protocadherin Fat 4 (4981 aa).

A signal peptide spans 1–42 (MNLAANRAPGRRRLPLPSPSLCQLLRVWGLLSLLPGSARVQA). At 43 to 4505 (AEQRQVFQVM…PDEISLPLWA (4463 aa)) the chain is on the extracellular side. 34 Cadherin domains span residues 44-135 (EQRQ…APVF), 136-250 (PDPS…PPVF), 251-353 (GSSH…DPVV), 359-475 (PATS…PPVF), 476-582 (EQQV…KPVF), 584-689 (QPEG…SPVF), 690-793 (YPVQ…PPVF), 794-893 (SQAA…APHF), 894-996 (LQAV…PPVF), 997-1100 (DQIS…RPLF), 1101-1210 (NSTN…APKF), 1211-1315 (LKDF…TPSF), 1316-1420 (PKST…PPSF), 1421-1529 (PPGD…VPMF), 1529-1629 (FISQ…GPVF), 1630-1740 (TQTK…PPVF), 1741-1841 (PTDT…TPRF), 1842-1944 (SRPV…PPVF), 1945-2051 (SMSS…PPMF), 2051-2154 (FLSP…NPVF), 2155-2259 (AQAM…VPVF), 2260-2364 (ELSP…VPTF), 2365-2468 (ANNM…PPRF), 2469-2569 (QHHP…FPKV), 2570-2671 (RAKE…APTF), 2672-2775 (EEDP…APRF), 2775-2874 (FSQI…TPRF), 2875-2985 (SRPS…PPQF), 2986-3091 (LQNK…TPEF), 3092-3196 (SQNH…SPVF), 3197-3300 (VPDE…VPRF), 3301-3406 (VSKL…PPVF), 3407-3512 (SLST…GPVL), and 3511-3622 (VLTV…VEIF). N-linked (GlcNAc...) asparagine glycans are attached at residues Asn84 and Asn237. N-linked (GlcNAc...) asparagine glycans are attached at residues Asn393, Asn416, Asn435, Asn483, Asn551, Asn615, Asn676, Asn721, Asn825, Asn880, Asn948, Asn1085, Asn1101, Asn1104, Asn1225, Asn1296, Asn1389, and Asn1514. N-linked (GlcNAc...) asparagine glycosylation is found at Asn1828, Asn1899, Asn1967, and Asn2119. Asn2387 and Asn2432 each carry an N-linked (GlcNAc...) asparagine glycan. Asn2923, Asn2939, Asn3038, Asn3142, Asn3219, Asn3394, and Asn3479 each carry an N-linked (GlcNAc...) asparagine glycan. 2 N-linked (GlcNAc...) asparagine glycosylation sites follow: Asn3708 and Asn3760. The 59-residue stretch at 3804–3862 (DHDPCIHGPCQNGGSCLRRLAVGSALKIQESLPVIIVANEPLQPSQCKCVPGYAGSWCE) folds into the EGF-like 1 domain. 12 cysteine pairs are disulfide-bonded: Cys3808/Cys3819, Cys3813/Cys3850, Cys3852/Cys3861, Cys3868/Cys3879, Cys3873/Cys3888, Cys3890/Cys3899, Cys3906/Cys3917, Cys3911/Cys3926, Cys3928/Cys3937, Cys3944/Cys3955, Cys3949/Cys3964, and Cys3966/Cys3975. The EGF-like 2; calcium-binding domain occupies 3864-3900 (DIDECLPAPCHNGGTCHNLVGGFSCSCPEGFTGRACE). Residues 3902–3938 (DINECLPSPCKHGAVCQNFPGGFNCVCKTGYTGKMCE) enclose the EGF-like 3; calcium-binding domain. In terms of domain architecture, EGF-like 4 spans 3940–3976 (SVNYCECNPCFNGGSCQSGVESYYCHCPFGVFGKHCE). One can recognise a Laminin G-like 1 domain in the interval 3977–4161 (LNSYGFEELS…LAAQGILDQC (185 aa)). Asn4019 is a glycosylation site (N-linked (GlcNAc...) asparagine). 4 disulfides stabilise this stretch: Cys4135–Cys4161, Cys4168–Cys4179, Cys4173–Cys4188, and Cys4190–Cys4199. Residues 4164-4200 (LEGTCARNPCQHGGTCVDFWSWQQCQCMEGLTGKYCE) form the EGF-like 5 domain. The region spanning 4219–4399 (YHMSQSEKRE…KTDPSVKIGC (181 aa)) is the Laminin G-like 2 domain. 2 N-linked (GlcNAc...) asparagine glycosylation sites follow: Asn4269 and Asn4314. Cystine bridges form between Cys4366-Cys4399, Cys4431-Cys4442, Cys4436-Cys4452, and Cys4454-Cys4463. An EGF-like 6 domain is found at 4427–4464 (PPGDCASHPCQNGGSCEPGLLSGYTCSCPESHTGRTCE). Residues 4506–4526 (VPAIVGSCATALALLVLSLIL) traverse the membrane as a helical segment. Residues 4527-4981 (CNQCRGKMPK…AKDGEAEQYV (455 aa)) are Cytoplasmic-facing. Disordered regions lie at residues 4535 to 4585 (PKNP…PDII), 4677 to 4713 (PSSY…KPSA), 4753 to 4773 (RRSK…SRLK), 4796 to 4911 (RLNT…PAAA), and 4957 to 4981 (AAGN…EQYV). Positions 4677–4701 (PSSYGQGLRTSSLSHSACPTPNPLS) are enriched in polar residues. A necessary and sufficient for interaction with MPDZ region spans residues 4708–4797 (FSKPSAFYRN…GLSIEEVERL (90 aa)). Positions 4811–4823 (DHGRSSSEEDCRR) are enriched in basic and acidic residues. The residue at position 4878 (Ser4878) is a Phosphoserine. Residues 4971–4981 (AAKDGEAEQYV) show a composition bias toward basic and acidic residues.

As to quaternary structure, heterophilic interaction with DCHS1; this interaction affects their respective protein levels. Interacts (via cytoplasmic domain) with MPDZ. Forms a complex with PALS1 and MPDZ. As to expression, widely expressed.

The protein resides in the membrane. In terms of biological role, cadherins are cell-cell interaction molecules. FAT4 plays a role in the maintenance of planar cell polarity as well as in inhibition of YAP1-mediated neuroprogenitor cell proliferation and differentiation. The protein is Protocadherin Fat 4 (Fat4) of Mus musculus (Mouse).